The following is an 860-amino-acid chain: Eukaryotic translation initiation factor 3 subunit C (860 aa).

A disordered region spans residues 1–79 (MSSRFFHGGS…ESDEEEDRVT (79 aa)). Composition is skewed to acidic residues over residues 16–53 (SSDE…DDEA) and 67–76 (DLDESDEEED). Residues 598-772 (FHMHINLELL…NAIVFRKGVE (175 aa)) form the PCI domain. The tract at residues 808–860 (AFQRDQGPGGRLGRGQGRGGQRTAGGRPPIGGQQRRPGGQQFSGGALGGAIKA) is disordered. The segment covering 814–830 (GPGGRLGRGQGRGGQRT) has biased composition (gly residues). A compositionally biased stretch (low complexity) spans 831–847 (AGGRPPIGGQQRRPGGQ). A compositionally biased stretch (gly residues) spans 848-860 (QFSGGALGGAIKA).

Belongs to the eIF-3 subunit C family. As to quaternary structure, component of the eukaryotic translation initiation factor 3 (eIF-3) complex.

Its subcellular location is the cytoplasm. Its function is as follows. Component of the eukaryotic translation initiation factor 3 (eIF-3) complex, which is involved in protein synthesis of a specialized repertoire of mRNAs and, together with other initiation factors, stimulates binding of mRNA and methionyl-tRNAi to the 40S ribosome. The eIF-3 complex specifically targets and initiates translation of a subset of mRNAs involved in cell proliferation. In Coccidioides immitis (strain RS) (Valley fever fungus), this protein is Eukaryotic translation initiation factor 3 subunit C.